Reading from the N-terminus, the 595-residue chain is Aspartate--tRNA(Asp/Asn) ligase (595 aa).

Glutamate 174 provides a ligand contact to L-aspartate. Positions 198-201 are aspartate; that stretch reads QLFK. L-aspartate is bound at residue arginine 220. Residues 220–222 and glutamine 229 each bind ATP; that span reads RDE. Residue histidine 456 participates in L-aspartate binding. Glutamate 486 is a binding site for ATP. Arginine 493 serves as a coordination point for L-aspartate. 538–541 is an ATP binding site; it reads GFDR.

It belongs to the class-II aminoacyl-tRNA synthetase family. Type 1 subfamily. In terms of assembly, homodimer.

The protein resides in the cytoplasm. It carries out the reaction tRNA(Asx) + L-aspartate + ATP = L-aspartyl-tRNA(Asx) + AMP + diphosphate. In terms of biological role, aspartyl-tRNA synthetase with relaxed tRNA specificity since it is able to aspartylate not only its cognate tRNA(Asp) but also tRNA(Asn). Reaction proceeds in two steps: L-aspartate is first activated by ATP to form Asp-AMP and then transferred to the acceptor end of tRNA(Asp/Asn). The polypeptide is Aspartate--tRNA(Asp/Asn) ligase (Gloeobacter violaceus (strain ATCC 29082 / PCC 7421)).